The sequence spans 184 residues: NADH-quinone oxidoreductase subunit B (184 aa).

4 residues coordinate [4Fe-4S] cluster: cysteine 37, cysteine 38, cysteine 103, and cysteine 132.

This sequence belongs to the complex I 20 kDa subunit family. As to quaternary structure, NDH-1 is composed of 14 different subunits. Subunits NuoB, C, D, E, F, and G constitute the peripheral sector of the complex. The cofactor is [4Fe-4S] cluster.

The protein resides in the cell membrane. The catalysed reaction is a quinone + NADH + 5 H(+)(in) = a quinol + NAD(+) + 4 H(+)(out). Its function is as follows. NDH-1 shuttles electrons from NADH, via FMN and iron-sulfur (Fe-S) centers, to quinones in the respiratory chain. The immediate electron acceptor for the enzyme in this species is believed to be a menaquinone. Couples the redox reaction to proton translocation (for every two electrons transferred, four hydrogen ions are translocated across the cytoplasmic membrane), and thus conserves the redox energy in a proton gradient. In Mycobacterium bovis (strain BCG / Pasteur 1173P2), this protein is NADH-quinone oxidoreductase subunit B.